A 538-amino-acid polypeptide reads, in one-letter code: Putative cysteine ligase BshC (538 aa).

Positions 248 to 268 form a coiled coil; sequence ISKYKEVQEGLRNQQEVIKEL.

It belongs to the BshC family.

Involved in bacillithiol (BSH) biosynthesis. May catalyze the last step of the pathway, the addition of cysteine to glucosamine malate (GlcN-Mal) to generate BSH. The polypeptide is Putative cysteine ligase BshC (Bacillus cereus (strain B4264)).